The primary structure comprises 465 residues: Serine/threonine-protein kinase AtPK1/AtPK6 (465 aa).

The LVxCxE motif signature appears at 91 to 96; it reads LVECLE. One can recognise a Protein kinase domain in the interval 134–389; sequence FEVMKVVGKG…AEEIKQHKWF (256 aa). Residues 140-148 and lysine 163 contribute to the ATP site; that span reads VGKGAFGKV. Aspartate 257 acts as the Proton acceptor in catalysis. The interval 275–301 is activation loop; sequence DFGLAKEFEENTRSNSMCGTTEYMAPE. Serine 290 is modified (phosphoserine; by PDPK1). Residues 390–460 form the AGC-kinase C-terminal domain; the sequence is KGINWKKLEA…VRPPPSFLHQ (71 aa). Threonine 449 is subject to Phosphothreonine; by TOR.

The protein belongs to the protein kinase superfamily. AGC Ser/Thr protein kinase family. S6 kinase subfamily. Interacts with RAPTOR1. Interacts with RBR1-E2FB complex through its LVxCxE motif. Interacts with TAP46. Binds to MRF1. Undergoes serine-specific autophosphorylation. Phosphorylated at Thr-449 by TOR. As to expression, expressed in all tissues.

It is found in the cytoplasm. The protein localises to the nucleus. The enzyme catalyses L-seryl-[protein] + ATP = O-phospho-L-seryl-[protein] + ADP + H(+). It carries out the reaction L-threonyl-[protein] + ATP = O-phospho-L-threonyl-[protein] + ADP + H(+). Its activity is regulated as follows. Activated by PDK1. Repressed during osmotic stress. Its function is as follows. Downstream effector of TOR signaling pathway involved in osmotic stress response. Could be involved in the control of plant growth and development. Phosphorylates the ribosomal proteins P14, P16 and S6. Functions as a repressor of cell proliferation and required for maintenance of chromosome stability and ploidy levels through the RBR1-E2F pathway. Mediates the phosphorylation of MRFs (e.g. MRF1). In Arabidopsis thaliana (Mouse-ear cress), this protein is Serine/threonine-protein kinase AtPK1/AtPK6.